Here is a 449-residue protein sequence, read N- to C-terminus: Nucleoprotein (449 aa).

Residues 1–55 (MSFTPGKQSSSRASSGNRSGNGILKWADQSDQSRNVQTRGRRVQSKQTATSQQPS) form a disordered region. The segment covering 9–22 (SSSRASSGNRSGNG) has biased composition (low complexity). 2 stretches are compositionally biased toward polar residues: residues 29–38 (QSDQSRNVQT) and 45–55 (SKQTATSQQPS). The RNA-binding stretch occupies residues 52–194 (QQPSGGTVVP…GYYIEGSGRS (143 aa)). The region spanning 61 to 190 (PYYSWFSGIT…VLPQGYYIEG (130 aa)) is the CoV N NTD domain. The RNA site is built by R106, R122, and R164. 3 disordered regions span residues 158-231 (PADI…VTPD), 266-297 (ILNK…NFGG), and 387-449 (MMNI…TSEI). Residue S167 is modified to Phosphoserine; by host. T174 carries the phosphothreonine; by host modification. S191 bears the Phosphoserine; by host mark. Polar residues-rich tracts occupy residues 194-204 (SAPNSRSTSRA) and 212-227 (GSRS…STPG). Residues 259–384 (AKEVRQKILN…QNLNAYQHQE (126 aa)) enclose the CoV N CTD domain. The segment covering 266 to 276 (ILNKPRQKRSP) has biased composition (basic residues). The tract at residues 266-385 (ILNKPRQKRS…NLNAYQHQED (120 aa)) is dimerization. S391 is modified (phosphoserine; by host). Positions 400–410 (QKNGQVENDNV) are enriched in polar residues. Positions 423–440 (KSRELTAEDISLLKKMDE) are enriched in basic and acidic residues. S424 is subject to Phosphoserine; by host. T428 carries the phosphothreonine; by host modification.

It belongs to the betacoronavirus nucleocapsid protein family. As to quaternary structure, homooligomer. Both monomeric and oligomeric forms interact with RNA. Interacts with protein M. Interacts with NSP3; this interaction serves to tether the genome to the newly translated replicase-transcriptase complex at a very early stage of infection. In terms of processing, ADP-ribosylated. The ADP-ribosylation is retained in the virion during infection. Post-translationally, phosphorylated on serine and threonine residues.

The protein localises to the virion. It is found in the host endoplasmic reticulum-Golgi intermediate compartment. It localises to the host Golgi apparatus. Packages the positive strand viral genome RNA into a helical ribonucleocapsid (RNP) and plays a fundamental role during virion assembly through its interactions with the viral genome and membrane protein M. Plays an important role in enhancing the efficiency of subgenomic viral RNA transcription as well as viral replication. The polypeptide is Nucleoprotein (Sus scrofa (Pig)).